We begin with the raw amino-acid sequence, 116 residues long: Putative antiporter subunit mnhC2 (116 aa).

Transmembrane regions (helical) follow at residues 3 to 23, 28 to 48, and 72 to 92; these read LILLLVIGFLVFIGTYMILSL, IVIGISIYTHAGNLIIMSMGH, and AIVLTAIVIGFAMTAFLLVLV.

It belongs to the CPA3 antiporters (TC 2.A.63) subunit C family. As to quaternary structure, may form a heterooligomeric complex that consists of seven subunits: mnhA2, mnhB2, mnhC2, mnhD2, mnhE2, mnhF2 and mnhG2.

The protein resides in the cell membrane. In Staphylococcus haemolyticus (strain JCSC1435), this protein is Putative antiporter subunit mnhC2 (mnhC2).